Consider the following 260-residue polypeptide: Alpha-acetolactate decarboxylase (260 aa).

This sequence belongs to the alpha-acetolactate decarboxylase family.

The enzyme catalyses (2S)-2-acetolactate + H(+) = (R)-acetoin + CO2. Its pathway is polyol metabolism; (R,R)-butane-2,3-diol biosynthesis; (R,R)-butane-2,3-diol from pyruvate: step 2/3. Its function is as follows. Converts acetolactate into acetoin, which can be excreted by the cells. This may be a mechanism for controlling the internal pH of cells in the stationary stage. This is Alpha-acetolactate decarboxylase (budA) from Klebsiella aerogenes (Enterobacter aerogenes).